A 123-amino-acid chain; its full sequence is Small ribosomal subunit protein bS18 (123 aa).

Polar residues predominate over residues 1–10 (MADETTVSTP). A disordered region spans residues 1–52 (MADETTVSTPAASGTETPSTGGGGAPQGRPQGGPRGDRGPRPGGSGRDGGRK). Over residues 20–34 (TGGGGAPQGRPQGGP) the composition is skewed to gly residues.

This sequence belongs to the bacterial ribosomal protein bS18 family. As to quaternary structure, part of the 30S ribosomal subunit. Forms a tight heterodimer with protein bS6.

Functionally, binds as a heterodimer with protein bS6 to the central domain of the 16S rRNA, where it helps stabilize the platform of the 30S subunit. The protein is Small ribosomal subunit protein bS18 of Koribacter versatilis (strain Ellin345).